A 273-amino-acid polypeptide reads, in one-letter code: Undecaprenyl-diphosphatase (273 aa).

9 helical membrane-spanning segments follow: residues 1–21 (MEPIQGVVLGIIQGLTEFLPV), 39–59 (PALFFDVSLHMGTLLAVLIVF), 63–83 (LGMMAVSVGRGIVAMFGGIAP), 92–112 (LKLALLIVVGSVPTAILGLGL), 118–138 (LFFSLPLVGAMLLVTGTLLWL), 165–185 (GLAVLPGISRSGATIAAGLFL), 195–215 (FSFLLCIPAIVGAELLSAVDL), 225–245 (ATVLGSLTAFVVGYGALKVLI), and 252–272 (RFYLFAPYCFILGGVTLWIGM).

This sequence belongs to the UppP family.

The protein localises to the cell inner membrane. The enzyme catalyses di-trans,octa-cis-undecaprenyl diphosphate + H2O = di-trans,octa-cis-undecaprenyl phosphate + phosphate + H(+). Catalyzes the dephosphorylation of undecaprenyl diphosphate (UPP). Confers resistance to bacitracin. In Desulfosudis oleivorans (strain DSM 6200 / JCM 39069 / Hxd3) (Desulfococcus oleovorans), this protein is Undecaprenyl-diphosphatase.